Reading from the N-terminus, the 156-residue chain is MPTEIENINPNVYDRIKERVLTANEEDENVPDPFDKREIFDLIRNINDPEHPLTLEELHVVQEDLIRINDSQNSVHISFTPTIPHCSMATLIGLSIRVKLLRSLPPRFKVTVEITPGTHASELAVNKQLADKERVAAALENNHLAEVINQCIAAKG.

It belongs to the MIP18 family. Component of the CGX complex composed of crb, galla (galla-1 or galla-2) and Xpd. Interacts with crb (via intracellular domain). Also able to interact with Xpd in the absence of crb. Interacts with Mms19.

Component of the crb-galla-Xpd (CGX) complex which is essential for proper mitotic chromosome segregation in early embryos. The CGX complex is also required for cell proliferation in developing wing disks. In the CGX complex, acts with crb to recruit Xpd thus forming the functional complex. The protein is MIP18 family protein galla-2 of Drosophila melanogaster (Fruit fly).